Consider the following 288-residue polypeptide: Transmembrane and coiled-coil domain-containing protein 5A (288 aa).

Residues 13–105 adopt a coiled-coil conformation; sequence IISLNMDLER…VHSISELQRK (93 aa). A helical membrane pass occupies residues 227 to 249; that stretch reads SLLFSTLFFIRLLGYLIFHLSFI.

In terms of tissue distribution, testis-specific. Expressed in spermatogenic cells of testis but disappear by the time mature spermatozoa are formed (at protein level).

Its subcellular location is the endoplasmic reticulum membrane. It is found in the nucleus membrane. The protein is Transmembrane and coiled-coil domain-containing protein 5A (Tmco5a) of Rattus norvegicus (Rat).